The following is a 418-amino-acid chain: MGILQDLEFRGLINQQTDAEGLEQLLEKESVKLYCGFDPTADSLHIGHMLPVLMLRRFQLAGHQPIALVGGGTGMIGDPSGKKAERTLNTKDTVAYYTESIKNQLSNFLEFENVENPATMANNYDWLGNLDVISFLRDIGKNFGLNYMLAKDTVASRLETGISFTEFSYMILQSYDFLNLYQHHNCRLQIGGSDQWGNITAGLELIRKSEEDAKAFGLTIPLVTKSDGTKFGKTEGGAIWLDPEKTTPYEFYQFWINTDDRDVVKYLKYFTFLSHEEILELEKQVAEAPEKRAAQKALGAEMTKLVHGEEALEQAIKISAALFSGSVAELTASEIEQGFKDVPSVERTAEDTVLIDLLVESKISPSKRQAREDVTNGAIYVNGERTQALDYVVTEKDRIEGKFTIIRRGKKKYFLIRY.

Tyr34 is a binding site for L-tyrosine. Residues 39–48 (PTADSLHIGH) carry the 'HIGH' region motif. 2 residues coordinate L-tyrosine: Tyr169 and Gln173. The short motif at 230-234 (KFGKT) is the 'KMSKS' region element. Lys233 lines the ATP pocket. Residues 352 to 418 (TVLIDLLVES…GKKKYFLIRY (67 aa)) enclose the S4 RNA-binding domain.

The protein belongs to the class-I aminoacyl-tRNA synthetase family. TyrS type 1 subfamily. Homodimer.

It localises to the cytoplasm. The enzyme catalyses tRNA(Tyr) + L-tyrosine + ATP = L-tyrosyl-tRNA(Tyr) + AMP + diphosphate + H(+). Catalyzes the attachment of tyrosine to tRNA(Tyr) in a two-step reaction: tyrosine is first activated by ATP to form Tyr-AMP and then transferred to the acceptor end of tRNA(Tyr). The protein is Tyrosine--tRNA ligase 1 of Bacillus anthracis.